The chain runs to 740 residues: Vacuolar protein sorting-associated protein 51 homolog (740 aa).

Coiled coils occupy residues 65-87 (SATDTIRRMKDDFKQMETDVNLL) and 322-344 (RALDRLHRRLQAMRNICRGLEVQ).

Belongs to the VPS51 family. As to quaternary structure, component of the Golgi-associated retrograde protein (GARP) complex.

Its function is as follows. May act as a component of the GARP complex that is involved in retrograde transport from early and late endosomes to the trans-Golgi network (TGN). The sequence is that of Vacuolar protein sorting-associated protein 51 homolog from Drosophila melanogaster (Fruit fly).